The chain runs to 1121 residues: Myelin transcription factor 1 (1121 aa).

Disordered regions lie at residues 1–156 (MSLE…SKGS) and 200–376 (EAAE…MTRG). The CCHHC-type 1 zinc-finger motif lies at 21–64 (PETTAADLSCPTPGCTGSGHVRGKYSRHRSLQSCPLAKKRKLEG). Residues Cys30, Cys35, His48, and Cys54 each contribute to the Zn(2+) site. The span at 41-50 (VRGKYSRHRS) shows a compositional bias: basic residues. Composition is skewed to basic and acidic residues over residues 62–71 (LEGAEAEHLV) and 123–132 (DEIHRPETAE). Low complexity predominate over residues 147–156 (GSATASSKGS). Residues 258–308 (EEEDEEEEEEEEEEEEDEEEEEEEEEEEEEEEEEEEEEEEEEEEEEEEEAA) show a composition bias toward acidic residues. Positions 346-358 (VRSDDDKDEDTHS) are enriched in basic and acidic residues. CCHHC-type zinc fingers lie at residues 433–476 (SRAE…PPEI) and 477–520 (LAMH…KLAK). Residues Cys442, Cys447, His460, Cys466, Cys486, Cys491, His504, and Cys510 each contribute to the Zn(2+) site. Disordered stretches follow at residues 517–540 (KLAKSHEKQQPQTGDPSKSSSNSD) and 668–774 (TLDL…EERK). Polar residues predominate over residues 526 to 540 (QPQTGDPSKSSSNSD). The span at 705–723 (SSTSAPSSSMTSPQSSQAS) shows a compositional bias: low complexity. Over residues 724 to 733 (RQDEWDRPLD) the composition is skewed to basic and acidic residues. The segment covering 759-770 (EADDQEVSEENF) has biased composition (acidic residues). 4 CCHHC-type zinc fingers span residues 791-834 (KDIK…LRNL), 835-878 (MAAH…GVKV), 884-927 (DKED…QKEG), and 937-980 (KSLK…GKKG). Residues Cys800, Cys805, His818, Cys824, Cys844, Cys849, His862, Cys868, Cys893, Cys898, His911, Cys917, Cys946, Cys951, His964, and Cys970 each coordinate Zn(2+).

The protein belongs to the MYT1 family. As to quaternary structure, interacts with STEAP3. In terms of tissue distribution, mostly in developing nervous system. Expressed in neural progenitors and oligodendrocyte lineage cells. More highly expressed in oligodendrocyte progenitors than in differentiated oligodendrocytes.

The protein resides in the nucleus. Its function is as follows. Binds to the promoter region of genes encoding proteolipid proteins of the central nervous system. May play a role in the development of neurons and oligodendroglia in the CNS. May regulate a critical transition point in oligodendrocyte lineage development by modulating oligodendrocyte progenitor proliferation relative to terminal differentiation and up-regulation of myelin gene transcription. This Homo sapiens (Human) protein is Myelin transcription factor 1 (MYT1).